The chain runs to 62 residues: Conotoxin TsMLCL-02 (62 aa).

The N-terminal stretch at 1–19 is a signal peptide; that stretch reads MLCLPVFIILLLLASPAAP. Positions 20–54 are excised as a propeptide; that stretch reads NPLERRIQSDLIRAALEDADMKTEKGILSSIMGTL.

Belongs to the conotoxin T superfamily. Expressed by the venom duct.

The protein resides in the secreted. This is Conotoxin TsMLCL-02 from Conus tessulatus (Tessellate cone).